Here is a 359-residue protein sequence, read N- to C-terminus: Guanine nucleotide-binding protein subunit alpha-11 (359 aa).

Residues cysteine 9 and cysteine 10 are each lipidated (S-palmitoyl cysteine). One can recognise a G-alpha domain in the interval 38–359; that stretch reads RELKLLLLGT…QLNLKEYNLV (322 aa). The segment at 41–54 is G1 motif; the sequence is KLLLLGTGESGKST. GTP-binding positions include 46 to 53 and 180 to 183; these read GTGESGKS and LRVR. Mg(2+) is bound at residue serine 53. The tract at residues 178–186 is G2 motif; the sequence is DVLRVRVPT. Threonine 186 provides a ligand contact to Mg(2+). Positions 201–210 are G3 motif; it reads FRMVDVGGQR. The residue at position 209 (glutamine 209) is a Deamidated glutamine; by Photorhabdus PAU_02230. The interval 270-277 is G4 motif; the sequence is ILFLNKKD. GTP is bound by residues 274–277 and alanine 331; that span reads NKKD. The segment at 329-334 is G5 motif; the sequence is TCATDT.

The protein belongs to the G-alpha family. G(q) subfamily. As to quaternary structure, g proteins are composed of 3 units; alpha, beta and gamma. The alpha chain contains the guanine nucleotide binding site. Interacts with RGS22. Interacts with NTSR1. (Microbial infection) Interacts with human cytomegalovirus (HHV-5) US28. In terms of processing, (Microbial infection) Deamidated at Gln-209 by Photorhabdus asymbiotica toxin PAU_02230, blocking GTP hydrolysis of heterotrimeric GNAQ or GNA11 and G-alphai (GNAI1, GNAI2 or GNAI3) proteins, thereby activating RhoA. Expressed in testis.

Its subcellular location is the cell membrane. The protein resides in the cytoplasm. It carries out the reaction GTP + H2O = GDP + phosphate + H(+). Its function is as follows. Guanine nucleotide-binding proteins (G proteins) function as transducers downstream of G protein-coupled receptors (GPCRs) in numerous signaling cascades. The alpha chain contains the guanine nucleotide binding site and alternates between an active, GTP-bound state and an inactive, GDP-bound state. Signaling by an activated GPCR promotes GDP release and GTP binding. The alpha subunit has a low GTPase activity that converts bound GTP to GDP, thereby terminating the signal. Both GDP release and GTP hydrolysis are modulated by numerous regulatory proteins. Signaling is mediated via phospholipase C-beta-dependent inositol lipid hydrolysis for signal propagation: activates phospholipase C-beta: following GPCR activation, GNA11 activates PLC-beta (PLCB1, PLCB2, PLCB3 or PLCB4), leading to production of diacylglycerol (DAG) and inositol 1,4,5-trisphosphate (IP3). Transduces FFAR4 signaling in response to long-chain fatty acids (LCFAs). Together with GNAQ, required for heart development. In the respiratory epithelium, transmits OXGR1-dependent signals that lead to downstream intracellular Ca(2+) release and mucocilliary clearance of airborne pathogens. In Homo sapiens (Human), this protein is Guanine nucleotide-binding protein subunit alpha-11 (GNA11).